The primary structure comprises 213 residues: Eukaryotic translation initiation factor 4E (213 aa).

A phosphoserine; by CK2 mark is found at S2 and S15. T22 is modified (phosphothreonine). S28 and S30 each carry phosphoserine. K114 participates in a covalent cross-link: Glycyl lysine isopeptide (Lys-Gly) (interchain with G-Cter in ubiquitin).

Belongs to the eukaryotic initiation factor 4E family. In terms of assembly, component of the eIF4F complex, which composition varies with external and internal environmental conditions. It is composed of at least eIF4A (TIF1/TIF2), eIF4E (TIF45) and eIF4G (TIF4631 or TIF4632). Interacts with PAT1 in a RNA-dependent manner. eIF4E is also known to interact with other partners.

It localises to the cytoplasm. The protein localises to the nucleus. Functionally, recognizes and binds the 7-methylguanosine (m7G)-containing mRNA cap during an early step in the initiation of protein synthesis and facilitates ribosome binding by inducing the unwinding of the mRNAs secondary structures. The polypeptide is Eukaryotic translation initiation factor 4E (CDC33) (Saccharomyces cerevisiae (strain ATCC 204508 / S288c) (Baker's yeast)).